The primary structure comprises 194 residues: uncharacterized protein (194 aa).

Disordered regions lie at residues Met-1–Glu-72 and Val-113–Val-194. Basic and acidic residues predominate over residues Ala-26–Ala-39. Over residues Gly-146–Arg-171 the composition is skewed to polar residues.

This is an uncharacterized protein from Homo sapiens (Human).